An 805-amino-acid polypeptide reads, in one-letter code: MSSDPLQQVCDLIKGDLSLERVRDIKEQLLKEKSVVEYQLNKESDKYYGEVEESLKLLNLSKNSVTSIKQQINEVNKLGNDNRFAINRYDILFRATKLYETVNTTSSIYDRIYNFVALMEHIERLLVAELAEDALETGCPHLLEIHFLLTSARDFQEQVVVMAKEATEDAQRTVMKLFSRLSGIISKFDKLLDGLTYDIVEMARAEQISLAIRLFKIYDLEEREDLRIEAIRNIIKKKEIEIEKSSIKKLPNSKNTARLQDETPKVIEYPTNKGLYQEIMSGTISTRTAPRGYKHFLINGINNSISEMFGEMREKYVGDQKFDVLDNMDWIFNELIIVKEHIANCCPPHWNIFEVYFDQYYKELHSLITDLVESEPETIIILDILAFDKTFQDTLKQDFGFTKSEVKSVIGDKEKETLFKDYLNLIVVKMTEWIGNLEKAEFDVFLERSTPPHSDSDGLLFLDGTKTCFQMFTQQVEVAAGTNQAKILVGVVERFSDLLTKRQKNWISKISEEIKKQINYNHKYDIDPESITPEDECPGGLVEYLIAVSNDQMKAADYAVAISSKYGKLVSKVYEKQITNHLEGTLDGFAEVAQCSSLGLITLMFDDLRKPYQEIFSKTWYMGSQAQQIADTLDEYLLDIKPQMNSVLFVNFIDNVIGETIIKFLTALSFEHSFKNKNNKFLEAMKRDFEIFYQLFVKVLDGNESKDTLITQNFTVMEFFMDLSCEPIDSILDIWQKYLEVYWDSRIDLLVGILKCRKDVSSSERKKIVQQATEMLHEYRRNMEANGVDREPTLMRRFVLEFEKQ.

Position 2 is an N-acetylserine (serine 2).

It belongs to the SEC6 family. As to quaternary structure, the exocyst complex is composed of SEC3, SEC5, SEC6, SEC8, SEC10, SEC15, EXO70 and EXO84.

It is found in the cytoplasm. In terms of biological role, component of the exocyst complex involved in the docking of exocytic vesicles with fusion sites on the plasma membrane. The protein is Exocyst complex component SEC6 (SEC6) of Saccharomyces cerevisiae (strain ATCC 204508 / S288c) (Baker's yeast).